We begin with the raw amino-acid sequence, 957 residues long: Glycine dehydrogenase (decarboxylating) (957 aa).

Lys708 carries the N6-(pyridoxal phosphate)lysine modification.

The protein belongs to the GcvP family. In terms of assembly, the glycine cleavage system is composed of four proteins: P, T, L and H. Pyridoxal 5'-phosphate serves as cofactor.

It catalyses the reaction N(6)-[(R)-lipoyl]-L-lysyl-[glycine-cleavage complex H protein] + glycine + H(+) = N(6)-[(R)-S(8)-aminomethyldihydrolipoyl]-L-lysyl-[glycine-cleavage complex H protein] + CO2. Functionally, the glycine cleavage system catalyzes the degradation of glycine. The P protein binds the alpha-amino group of glycine through its pyridoxal phosphate cofactor; CO(2) is released and the remaining methylamine moiety is then transferred to the lipoamide cofactor of the H protein. The sequence is that of Glycine dehydrogenase (decarboxylating) from Salmonella arizonae (strain ATCC BAA-731 / CDC346-86 / RSK2980).